A 149-amino-acid chain; its full sequence is L-alanine exporter AlaE (149 aa).

4 helical membrane-spanning segments follow: residues 16–36 (FAMVVYCSVVNMLIEIFLSGM), 46–66 (LVAIPVNILIAWPYGVYRDLI), 83–105 (ADVLAYVTFQSPVYIIILLTVGA), and 115–135 (SSNIVVSMLMGAVYGYFLDYC).

Belongs to the AlaE exporter family.

The protein resides in the cell inner membrane. In terms of biological role, exports L-alanine. This chain is L-alanine exporter AlaE, found in Salmonella typhimurium (strain LT2 / SGSC1412 / ATCC 700720).